A 331-amino-acid chain; its full sequence is Centriolar satellite-associated tubulin polyglutamylase complex regulator 1 (331 aa).

Residues 1 to 111 form a required for interaction with PCM1 region; the sequence is MLSPERLALP…HCLLQLLCPD (111 aa). Residues 1–225 are required for interaction with TPGS1, LRRC49, and TTLL1; that stretch reads MLSPERLALP…SCPPPALVKE (225 aa). Positions 112-331 are required for interaction with TPGS2; it reads FPLELTQKAA…STEETDESET (220 aa). A disordered region spans residues 288–331; that stretch reads SPEASCLPSRTPPRVGSPWRPLHHSRKVDGESDGSTEETDESET. The span at 318–331 shows a compositional bias: acidic residues; the sequence is ESDGSTEETDESET. Serine 319 is subject to Phosphoserine.

Belongs to the CSTPP1 family. As to quaternary structure, interacts with PCM1. Interacts with TTLL1, TPGS1, TPGS2 and LRRC49; the interactions link CSTPP1 to the complex TPGC. Binds to alpha-tubulin.

The protein resides in the cytoplasm. The protein localises to the cytoskeleton. It is found in the microtubule organizing center. Its subcellular location is the centrosome. It localises to the centriolar satellite. Regulator of the tubulin polyglutamylase complex (TPGC) that controls cytoskeletal organization, nuclear shape, and cilium disassembly by balancing microtubule and actin assembly. Regulates the assembly and stability of the TPGC and thereby modulates polyglutamylation of the microtubule, which antagonizes MAP4 binding. This Homo sapiens (Human) protein is Centriolar satellite-associated tubulin polyglutamylase complex regulator 1.